The primary structure comprises 333 residues: Acyl-CoA wax alcohol acyltransferase 2 (333 aa).

A run of 3 helical transmembrane segments spans residues 15–35 (VFAL…VIIV), 38–58 (YLVV…WLAF), and 130–150 (TFPG…VPFL).

It belongs to the diacylglycerol acyltransferase family. Monomer. In terms of tissue distribution, expressed in Mueller cells of the retina (at protein level). Abundant in tissues rich in sebaceous glands such as the preputial gland and eyelid.

It localises to the endoplasmic reticulum membrane. The enzyme catalyses a long chain fatty alcohol + a fatty acyl-CoA = a wax ester + CoA. The catalysed reaction is all-trans-retinol + an acyl-CoA = an all-trans-retinyl ester + CoA. It catalyses the reaction an acyl-CoA + a 1,2-diacyl-sn-glycerol = a triacyl-sn-glycerol + CoA. It carries out the reaction 9-cis-retinol + a fatty acyl-CoA = 9-cis-retinyl ester + CoA. The enzyme catalyses 11-cis-retinol + a fatty acyl-CoA = 11-cis-retinyl ester + CoA. The catalysed reaction is 13-cis-retinol + a fatty acyl-CoA = 13-cis-retinyl ester + CoA. It catalyses the reaction a 1-acylglycerol + an acyl-CoA = a 1,2-diacylglycerol + CoA. It carries out the reaction 1-O-alkylglycerol + an acyl-CoA = 1-O-alkyl-3-acylglycerol + CoA. The enzyme catalyses a 2-acylglycerol + an acyl-CoA = a 1,2-diacyl-sn-glycerol + CoA. The catalysed reaction is 2-(9Z-octadecenoyl)-glycerol + hexadecanoyl-CoA = 1-hexadecanoyl-2-(9Z-octadecenoyl)-sn-glycerol + CoA. It catalyses the reaction 1,2-di-(9Z-octadecenoyl)-sn-glycerol + hexadecanoyl-CoA = 1,2-di-(9Z)-octadecenoyl-3-hexadecanoyl-sn-glycerol + CoA. It carries out the reaction hexadecan-1-ol + hexadecanoyl-CoA = hexadecanyl hexadecanoate + CoA. The enzyme catalyses hexadecane-1,2-diol + hexadecanoyl-CoA = 2-hydroxyhexadecyl hexadecanoate + CoA. The catalysed reaction is all-trans-retinol + hexadecanoyl-CoA = all-trans-retinyl hexadecanoate + CoA. It catalyses the reaction 1,2-di-(9Z-octadecenoyl)-sn-glycerol + (9Z)-octadecenoyl-CoA = 1,2,3-tri-(9Z-octadecenoyl)-glycerol + CoA. It carries out the reaction hexadecan-1-ol + (9Z)-octadecenoyl-CoA = hexadecanyl (9Z)-octadecenoate + CoA. The enzyme catalyses (9Z)-hexadecen-1-ol + (9Z)-octadecenoyl-CoA = 1-O-(9Z)-hexadecenyl (9Z)-octadecenoate + CoA. The catalysed reaction is octadecan-1-ol + (9Z)-octadecenoyl-CoA = 1-O-octadecyl (9Z)-octadecenoate + CoA. It catalyses the reaction (9Z)-octadecen-1-ol + (9Z)-octadecenoyl-CoA = 1-O-(9Z)-octadecenyl (9Z)-octadecenoate + CoA. It carries out the reaction hexadecan-1-ol + (9Z)-hexadecenoyl-CoA = 1-O-hexadecyl (9Z)-hexadecenoate + CoA. The enzyme catalyses hexadecan-1-ol + octadecanoyl-CoA = hexadecanyl octadecanoate + CoA. The catalysed reaction is 11-cis-retinol + hexadecanoyl-CoA = 11-cis-retinyl hexadecanoate + CoA. It catalyses the reaction 1-O-(9Z-octadecenyl)-glycerol + (9Z)-octadecenoyl-CoA = 1-O-(9Z-octadecyl)-3-(9Z-octadecenoyl)-glycerol + CoA. It carries out the reaction 1-(9Z-octadecenoyl)-glycerol + (9Z)-octadecenoyl-CoA = 1,2-di-(9Z-octadecenoyl)-glycerol + CoA. The enzyme catalyses 11-cis-retinol + tetradecanoyl-CoA = 11-cis-retinyl tetradecanoate + CoA. The catalysed reaction is 9-cis-retinol + tetradecanoyl-CoA = 9-cis-retinyl tetradecanoate + CoA. It catalyses the reaction 9-cis-retinol + hexadecanoyl-CoA = 9-cis-retinyl hexadecanoate + CoA. It carries out the reaction 13-cis-retinol + tetradecanoyl-CoA = 13-cis-retinyl tetradecanoate + CoA. The enzyme catalyses all-trans-retinol + tetradecanoyl-CoA = all-trans-retinyl tetradecanoate + CoA. The catalysed reaction is tetradecan-1-ol + tetradecanoyl-CoA = tetradecanyl tetradecanoate + CoA. 11-cis retinoids act as allosteric modulators of acyl-CoA retinol O-fatty-acyltransferase (ARAT) activity by suppressing esterification of 9-cis, 13-cis, or all-trans retinols concurrently increasing the enzyme specificity toward 11-cis isomer. Acyltransferase that catalyzes the formation of ester bonds between fatty alcohols and fatty acyl-CoAs to form wax monoesters. Shows a preference for medium chain acyl-CoAs from C12 to C16 in length and fatty alcohols shorter than C20, as the acyl donor and acceptor, respectively. Also possesses fatty acyl-CoA retinol acyltransferase (ARAT) activity that preferentially esterifies 11-cis-retinol, a chromophore precursor of bleached opsin pigments in cone cells. Shows higher catalytic efficiency toward 11-cis-retinol versus 9-cis-retinol, 13- cis-retinol and all-trans-retinol substrates. In Mus musculus (Mouse), this protein is Acyl-CoA wax alcohol acyltransferase 2 (Awat2).